The following is a 368-amino-acid chain: Probable multidrug ABC transporter permease YbhR (368 aa).

Topologically, residues 1-24 are cytoplasmic; the sequence is MFHRLWTLIRKELQSLLREPQTRA. The chain crosses the membrane as a helical span at residues 25–45; that stretch reads ILILPVLIQVILFPFAATLEV. Residues 46 to 173 are Periplasmic-facing; sequence TNATIAIYDE…WYNPNLDYKW (128 aa). One can recognise an ABC transmembrane type-2 domain in the interval 129-366; that stretch reads AQIAANYLQQ…SAAYAMFRRK (238 aa). Residues 174–194 form a helical membrane-spanning segment; sequence FVVPSLIAMITTIGVMIVTSL. The Cytoplasmic portion of the chain corresponds to 195–222; sequence SVAREREQGTLDQLLVSPLTTWQIFIGK. Residues 223 to 243 form a helical membrane-spanning segment; the sequence is AVPALIVATFQATIVLAIGIW. Residues 244–253 lie on the Periplasmic side of the membrane; the sequence is AYQIPFAGSL. A helical transmembrane segment spans residues 254–274; the sequence is ALFYFTMVIYGLSLVGFGLLI. The Cytoplasmic segment spans residues 275–284; it reads SSLCSTQQQA. A helical membrane pass occupies residues 285–305; it reads FIGVFVFMMPAILLSGYVSPV. At 306-339 the chain is on the periplasmic side; sequence ENMPVWLQNLTWINPIRHFTDITKQIYLKDASLD. Residues 340 to 360 traverse the membrane as a helical segment; that stretch reads IVWNSLWPLLVITATTGSAAY. Residues 361–368 are Cytoplasmic-facing; that stretch reads AMFRRKVM.

The protein belongs to the ABC-2 integral membrane protein family. In terms of assembly, the complex is probably composed of two ATP-binding proteins (YbhF) and two transmembrane proteins (YbhR and YbhS).

The protein localises to the cell inner membrane. Part of the ABC transporter complex YbhFSR that could be involved in efflux of cefoperazone. Probably involved in the translocation of the substrate across the membrane. The chain is Probable multidrug ABC transporter permease YbhR (ybhR) from Escherichia coli O157:H7.